The chain runs to 156 residues: dCTP deaminase (156 aa).

DCTP is bound by residues 79–84 (RSSLAR), D95, Q124, and Y138.

It belongs to the dCTP deaminase family. In terms of assembly, homotrimer.

It catalyses the reaction dCTP + H2O + H(+) = dUTP + NH4(+). It functions in the pathway pyrimidine metabolism; dUMP biosynthesis; dUMP from dCTP (dUTP route): step 1/2. Its function is as follows. Catalyzes the deamination of dCTP to dUTP. The polypeptide is dCTP deaminase (Pyrococcus furiosus (strain ATCC 43587 / DSM 3638 / JCM 8422 / Vc1)).